We begin with the raw amino-acid sequence, 312 residues long: Glyoxylate/hydroxypyruvate reductase A (312 aa).

The active site involves Arg227. Residue His275 is the Proton donor of the active site.

It belongs to the D-isomer specific 2-hydroxyacid dehydrogenase family. GhrA subfamily.

It localises to the cytoplasm. It carries out the reaction glycolate + NADP(+) = glyoxylate + NADPH + H(+). It catalyses the reaction (R)-glycerate + NAD(+) = 3-hydroxypyruvate + NADH + H(+). The enzyme catalyses (R)-glycerate + NADP(+) = 3-hydroxypyruvate + NADPH + H(+). Functionally, catalyzes the NADPH-dependent reduction of glyoxylate and hydroxypyruvate into glycolate and glycerate, respectively. In Escherichia coli O7:K1 (strain IAI39 / ExPEC), this protein is Glyoxylate/hydroxypyruvate reductase A.